Here is a 155-residue protein sequence, read N- to C-terminus: D-aminoacyl-tRNA deacylase (155 aa).

A Gly-cisPro motif, important for rejection of L-amino acids motif is present at residues 137-138 (GP).

This sequence belongs to the DTD family. Homodimer.

The protein localises to the cytoplasm. It catalyses the reaction glycyl-tRNA(Ala) + H2O = tRNA(Ala) + glycine + H(+). It carries out the reaction a D-aminoacyl-tRNA + H2O = a tRNA + a D-alpha-amino acid + H(+). In terms of biological role, an aminoacyl-tRNA editing enzyme that deacylates mischarged D-aminoacyl-tRNAs. Also deacylates mischarged glycyl-tRNA(Ala), protecting cells against glycine mischarging by AlaRS. Acts via tRNA-based rather than protein-based catalysis; rejects L-amino acids rather than detecting D-amino acids in the active site. By recycling D-aminoacyl-tRNA to D-amino acids and free tRNA molecules, this enzyme counteracts the toxicity associated with the formation of D-aminoacyl-tRNA entities in vivo and helps enforce protein L-homochirality. The chain is D-aminoacyl-tRNA deacylase from Paracidovorax citrulli (strain AAC00-1) (Acidovorax citrulli).